A 129-amino-acid chain; its full sequence is MRNSSSSTPPSIKAQHRAAKRRAIRRRRIDLNCGCSIYIHIDCRNNGFTHRGTYHCASSREWRLYLGDNKSPLFQDNQRRGSPLHQHQDIPLTNQVQPQPEESIGSPQGISQLPSMDDIDDSFWENLFK.

A Nuclear localization signal motif is present at residues 13-28; sequence KAQHRAAKRRAIRRRR. The segment at 33 to 50 is a zinc-finger region; sequence CGCSIYIHIDCRNNGFTH. Residues 73–118 are disordered; the sequence is LFQDNQRRGSPLHQHQDIPLTNQVQPQPEESIGSPQGISQLPSMDD. A compositionally biased stretch (polar residues) spans 91–114; it reads PLTNQVQPQPEESIGSPQGISQLP. The tract at residues 115–129 is transactivation; the sequence is SMDDIDDSFWENLFK.

Belongs to the geminiviridae transcriptional activator protein family. Monomer. Homodimer. Homooligomer. Self-interaction correlates with nuclear localization and efficient activation of transcription. Monomers suppress local silencing by interacting with and inactivating host adenosine kinase (ADK) in the cytoplasm. Interacts with and inhibits host SNF1 kinase. Binds to ssDNA. Phosphorylated.

It localises to the host nucleus. The protein localises to the host cytoplasm. Strong activator of the late viral genes promoters. Enhances the expression of the capsid protein and nuclear shuttle protein. Acts as a suppressor of RNA-mediated gene silencing, also known as post-transcriptional gene silencing (PTGS), a mechanism of plant viral defense that limits the accumulation of viral RNAs. Suppresses the host RNA silencing by inhibiting adenosine kinase (ADK), a kinase involved in a general methylation pathway. Also suppresses the host basal defense by interacting with and inhibiting SNF1 kinase, a key regulator of cell metabolism implicated in innate antiviral defense. Determines pathogenicity. This Tomato golden mosaic virus (strain Yellow vein) (TGMV) protein is Transcriptional activator protein.